Reading from the N-terminus, the 149-residue chain is Calmodulin (149 aa).

Threonine 2 bears the N-acetylthreonine mark. EF-hand domains follow at residues 8-43 (EQIAEFKEAFSLFDKDGDGTITTKELGTVMRSLGQN), 44-79 (PTEAELQDMINEVDADGNGTIDFPEFLTMMARKMKE), 81-116 (DSEEEIREAFRVFDKDGNGFISAAELRHVMTNLGEK), and 117-149 (LTDEEVDEMIREADIDGDGQVNYEEFVAMMTSK). Residues aspartate 21, aspartate 23, aspartate 25, threonine 27, glutamate 32, aspartate 57, aspartate 59, asparagine 61, threonine 63, glutamate 68, aspartate 94, aspartate 96, asparagine 98, and glutamate 105 each coordinate Ca(2+). The residue at position 116 (lysine 116) is an N6,N6,N6-trimethyllysine. Ca(2+) contacts are provided by aspartate 130, aspartate 132, aspartate 134, glutamine 136, and glutamate 141.

It belongs to the calmodulin family.

Its function is as follows. Calmodulin mediates the control of a large number of enzymes, ion channels and other proteins by Ca(2+). Among the enzymes to be stimulated by the calmodulin-Ca(2+) complex are a number of protein kinases and phosphatases. The chain is Calmodulin from Halichondria okadai (Marine sponge).